The primary structure comprises 379 residues: Oxidized polyvinyl alcohol hydrolase (379 aa).

A signal peptide spans 1–23 (MNQSLGVLRLTRGVIALALASVA). Residues Ser203 and Ser309 each act as charge relay system in the active site.

It belongs to the peptidase S9A family. In terms of assembly, monomer.

It carries out the reaction nonane-4,6-dione + H2O = pentan-2-one + butanoate + H(+). In terms of biological role, catalyzes the hydrolysis of 4,6-nonanedione, a beta-diketone compound. Also mediates hydrolysis of oxidized polyvinyl alcohol (PVA) in the second step in the degradation of polyvinyl alcohol. Not active toward the monoketone structure. The sequence is that of Oxidized polyvinyl alcohol hydrolase (pvaB) from Pseudomonas sp.